The primary structure comprises 128 residues: Small ribosomal subunit protein uS9c (128 aa).

Positions 106-128 (SRIKERKKYGLKKARKAPQFSKR) are disordered. Residues 109-128 (KERKKYGLKKARKAPQFSKR) show a composition bias toward basic residues.

Belongs to the universal ribosomal protein uS9 family.

It localises to the plastid. Its subcellular location is the chloroplast. In Cyanidium caldarium (Red alga), this protein is Small ribosomal subunit protein uS9c (rps9).